Reading from the N-terminus, the 24-residue chain is Coenzyme PQQ synthesis protein A (24 aa).

The pyrroloquinoline quinone (Glu-Tyr) cross-link spans 16–20 (EITMY).

Belongs to the PqqA family.

It participates in cofactor biosynthesis; pyrroloquinoline quinone biosynthesis. Required for coenzyme pyrroloquinoline quinone (PQQ) biosynthesis. PQQ is probably formed by cross-linking a specific glutamate to a specific tyrosine residue and excising these residues from the peptide. This is Coenzyme PQQ synthesis protein A from Variovorax paradoxus (strain S110).